A 459-amino-acid polypeptide reads, in one-letter code: Argininosuccinate lyase (459 aa).

The protein belongs to the lyase 1 family. Argininosuccinate lyase subfamily.

Its subcellular location is the cytoplasm. The catalysed reaction is 2-(N(omega)-L-arginino)succinate = fumarate + L-arginine. It functions in the pathway amino-acid biosynthesis; L-arginine biosynthesis; L-arginine from L-ornithine and carbamoyl phosphate: step 3/3. In Staphylococcus aureus (strain MRSA252), this protein is Argininosuccinate lyase.